The primary structure comprises 151 residues: Small ribosomal subunit protein uS15 (151 aa).

Belongs to the universal ribosomal protein uS15 family.

In Wuchereria bancrofti, this protein is Small ribosomal subunit protein uS15 (RPS13).